We begin with the raw amino-acid sequence, 133 residues long: Large ribosomal subunit protein uL14 (133 aa).

It belongs to the universal ribosomal protein uL14 family. In terms of assembly, part of the 50S ribosomal subunit. Forms a cluster with proteins L3 and L24e, part of which may contact the 16S rRNA in 2 intersubunit bridges.

Binds to 23S rRNA. Forms part of two intersubunit bridges in the 70S ribosome. This is Large ribosomal subunit protein uL14 from Methanopyrus kandleri (strain AV19 / DSM 6324 / JCM 9639 / NBRC 100938).